Here is a 231-residue protein sequence, read N- to C-terminus: 7-cyano-7-deazaguanine synthase (231 aa).

Residue 11-21 (LSGGLDSATTM) coordinates ATP. Zn(2+)-binding residues include Cys-195, Cys-205, Cys-208, and Cys-211.

Belongs to the QueC family. Zn(2+) serves as cofactor.

It carries out the reaction 7-carboxy-7-deazaguanine + NH4(+) + ATP = 7-cyano-7-deazaguanine + ADP + phosphate + H2O + H(+). It functions in the pathway purine metabolism; 7-cyano-7-deazaguanine biosynthesis. In terms of biological role, catalyzes the ATP-dependent conversion of 7-carboxy-7-deazaguanine (CDG) to 7-cyano-7-deazaguanine (preQ(0)). This is 7-cyano-7-deazaguanine synthase from Syntrophus aciditrophicus (strain SB).